We begin with the raw amino-acid sequence, 338 residues long: Glyceraldehyde-3-phosphate dehydrogenase 2 (338 aa).

Residues 13 to 14 (TI) and G111 contribute to the NAD(+) site. Residue 140–142 (SCN) coordinates D-glyceraldehyde 3-phosphate. C141 serves as the catalytic Nucleophile. R169 contacts NAD(+). 195-196 (HG) is a D-glyceraldehyde 3-phosphate binding site. NAD(+) is bound at residue Q300.

This sequence belongs to the glyceraldehyde-3-phosphate dehydrogenase family. Homotetramer.

It is found in the cytoplasm. The enzyme catalyses D-glyceraldehyde 3-phosphate + phosphate + NADP(+) = (2R)-3-phospho-glyceroyl phosphate + NADPH + H(+). The catalysed reaction is D-glyceraldehyde 3-phosphate + phosphate + NAD(+) = (2R)-3-phospho-glyceroyl phosphate + NADH + H(+). The protein operates within carbohydrate degradation; glycolysis; pyruvate from D-glyceraldehyde 3-phosphate: step 1/5. The protein is Glyceraldehyde-3-phosphate dehydrogenase 2 of Methanosarcina barkeri (strain Fusaro / DSM 804).